The chain runs to 169 residues: MPCCGSLTRAPIGLCGRRTSWPRLGEPWSTASTSAPNGLTTAFAFGYNDLIAAMNNHYKDRHVLAAAVRERAEVIVTTNLKHFPDDALKPYQIKALHPDDFLLDQLDLYEEATKAVILGMVDAYIDPPFTPHSLLDALGEQVPQFAAKARRLFPSGSPFGLGVLLPFDQ.

Its function is as follows. Toxic component of a type II toxin-antitoxin (TA) system. An RNase. The cognate antitoxin is VapB50. In Mycobacterium tuberculosis (strain ATCC 25618 / H37Rv), this protein is Putative ribonuclease VapC50.